We begin with the raw amino-acid sequence, 1010 residues long: Plasma membrane ATPase 2 (1010 aa).

Positions 1-14 (MQRNNGEGRPEGMH) are enriched in basic and acidic residues. Disordered stretches follow at residues 1–126 (MQRN…EDED) and 139–165 (QDQEEEQVEEEESPGPAGAAKVVPEEL). The Cytoplasmic segment spans residues 1 to 201 (MQRNNGEGRP…KEEKTNNIKK (201 aa)). Residues 25 to 34 (FKNNASPQDD) are compositionally biased toward polar residues. Over residues 42–52 (YEEGGVEDSAV) the composition is skewed to acidic residues. Residues 68-106 (APNTHAQQANLQSGNTSITHETQSTSRGQEATTSPSLSA) show a composition bias toward polar residues. Residues 140–151 (DQEEEQVEEEES) show a composition bias toward acidic residues. A helical membrane pass occupies residues 202–222 (FLSFFVGPIQFVMELAAALAA). The Extracellular portion of the chain corresponds to 223 to 226 (GLRD). A helical membrane pass occupies residues 227–246 (WVDFGVICALLLLNATVGFV). Over 247 to 377 (QEYQAGSIVD…SQGHFTEVLN (131 aa)) the chain is Cytoplasmic. The chain crosses the membrane as a helical span at residues 378 to 399 (GIGTILLVLVILTLLCIYTAAF). Topologically, residues 400-410 (YRSVRLAALLE) are extracellular. A helical membrane pass occupies residues 411-433 (YTLAITIIGVPVGLPAVVTTTMA). Over 434–805 (VGAAYLAKKK…LIIRNQLLNL (372 aa)) the chain is Cytoplasmic. Residue Asp-464 is the 4-aspartylphosphate intermediate of the active site. Residues Asp-720 and Asp-724 each coordinate Mg(2+). Residues 806–824 (ELIVFIAIFADVATLAIAY) form a helical membrane-spanning segment. Over 825-840 (DNAPYAMKPVKWNLPR) the chain is Extracellular. Residues 841 to 860 (LWGLATIVGILLAIGTWIVN) traverse the membrane as a helical segment. Residues 861–912 (TTMIAQGQNRGIVQNFGVQDEVLFLQISLTENWLIFITRCSGPFWSSFPSWQ) lie on the Cytoplasmic side of the membrane. The helical transmembrane segment at 913–933 (LSGAVLVVDILATLFCIFGWF) threads the bilayer. The Extracellular portion of the chain corresponds to 934-946 (KGGHQTSIVAVIR). Residues 947–963 (IWMYSFGIFCLIAGVYY) traverse the membrane as a helical segment. The Cytoplasmic portion of the chain corresponds to 964–1010 (ILSESSSFDRWMHGKHKERGTTRKLEDFVMQLQRTSTHHEAEGKVTS).

Belongs to the cation transport ATPase (P-type) (TC 3.A.3) family. Type IIIA subfamily. In terms of processing, in addition to transient phosphorylation of the active site Asp residue, this protein, but not the product of the pma1 locus, is phosphorylated efficiently in isolated plasma membrane.

The protein localises to the cell membrane. The catalysed reaction is ATP + H2O + H(+)(in) = ADP + phosphate + 2 H(+)(out). In terms of biological role, the plasma membrane ATPase of plants and fungi is a hydrogen ion pump. The proton gradient it generates drives the active transport of nutrients by H(+)-symport. The resulting external acidification and/or internal alkinization may mediate growth responses. The chain is Plasma membrane ATPase 2 (pma2) from Schizosaccharomyces pombe (strain 972 / ATCC 24843) (Fission yeast).